The primary structure comprises 499 residues: T-cell activation inhibitor, mitochondrial (499 aa).

Positions 206–233 form a coiled coil; it reads LRNSLPLRKELDRLKNELSELLQLSDIR.

As to expression, expressed in peripheral blood leukocytes, mainly in T-lymphocytes.

The protein localises to the mitochondrion. Functionally, may regulate T-cell apoptosis. This Mus musculus (Mouse) protein is T-cell activation inhibitor, mitochondrial (TCAIM).